The following is a 232-amino-acid chain: 7-cyano-7-deazaguanine synthase 2 (232 aa).

Phenylalanine 9–leucine 19 contributes to the ATP binding site. Positions 189, 198, 201, and 204 each coordinate Zn(2+).

It belongs to the QueC family. Zn(2+) is required as a cofactor.

It catalyses the reaction 7-carboxy-7-deazaguanine + NH4(+) + ATP = 7-cyano-7-deazaguanine + ADP + phosphate + H2O + H(+). It functions in the pathway purine metabolism; 7-cyano-7-deazaguanine biosynthesis. Catalyzes the ATP-dependent conversion of 7-carboxy-7-deazaguanine (CDG) to 7-cyano-7-deazaguanine (preQ(0)). The sequence is that of 7-cyano-7-deazaguanine synthase 2 from Pseudomonas fluorescens (strain ATCC BAA-477 / NRRL B-23932 / Pf-5).